A 372-amino-acid polypeptide reads, in one-letter code: PqqA peptide cyclase (372 aa).

The region spanning 4 to 220 (APPPLSVLLE…ETARRQLGDR (217 aa)) is the Radical SAM core domain. Residues C18, C22, and C25 each coordinate [4Fe-4S] cluster. The interval 342-372 (ATAEQESASPAPAFIYRRPERPAAATADPLE) is disordered.

This sequence belongs to the radical SAM superfamily. PqqE family. As to quaternary structure, interacts with PqqD. The interaction is necessary for activity of PqqE. [4Fe-4S] cluster is required as a cofactor.

The enzyme catalyses [PQQ precursor protein] + S-adenosyl-L-methionine = E-Y cross-linked-[PQQ precursor protein] + 5'-deoxyadenosine + L-methionine + H(+). The protein operates within cofactor biosynthesis; pyrroloquinoline quinone biosynthesis. Functionally, catalyzes the cross-linking of a glutamate residue and a tyrosine residue in the PqqA protein as part of the biosynthesis of pyrroloquinoline quinone (PQQ). The sequence is that of PqqA peptide cyclase from Xanthomonas euvesicatoria pv. vesicatoria (strain 85-10) (Xanthomonas campestris pv. vesicatoria).